The sequence spans 260 residues: Triosephosphate isomerase (260 aa).

11–13 contacts substrate; the sequence is NWK. The Electrophile role is filled by histidine 103. The active-site Proton acceptor is the glutamate 175. Residues glycine 181, serine 220, and 241 to 242 each bind substrate; that span reads GG.

This sequence belongs to the triosephosphate isomerase family. Homodimer.

The protein resides in the cytoplasm. The enzyme catalyses D-glyceraldehyde 3-phosphate = dihydroxyacetone phosphate. The protein operates within carbohydrate biosynthesis; gluconeogenesis. Its pathway is carbohydrate degradation; glycolysis; D-glyceraldehyde 3-phosphate from glycerone phosphate: step 1/1. In terms of biological role, involved in the gluconeogenesis. Catalyzes stereospecifically the conversion of dihydroxyacetone phosphate (DHAP) to D-glyceraldehyde-3-phosphate (G3P). In Shewanella halifaxensis (strain HAW-EB4), this protein is Triosephosphate isomerase.